The sequence spans 200 residues: uncharacterized protein (200 aa).

The Response regulatory domain maps to 3-119 (RLFIAEDQRM…DLADAIRKCV (117 aa)). D54 bears the 4-aspartylphosphate mark. The 66-residue stretch at 133 to 198 (MMRDENPLTV…EAASIAEEKG (66 aa)) folds into the HTH luxR-type domain. The segment at residues 157-176 (TKDITLELYLSQGTVRNYIS) is a DNA-binding region (H-T-H motif).

Phosphorylated by YvfT.

It is found in the cytoplasm. Member of the two-component regulatory system YvfT/YvfU. This is an uncharacterized protein from Bacillus subtilis (strain 168).